Reading from the N-terminus, the 691-residue chain is Elongation factor G (691 aa).

The 275-residue stretch at 8–282 folds into the tr-type G domain; the sequence is ERVRNIGIAA…AVIDYLPAPI (275 aa). Residues 17 to 24, 81 to 85, and 135 to 138 contribute to the GTP site; these read AHIDAGKT, DTPGH, and NKMD.

This sequence belongs to the TRAFAC class translation factor GTPase superfamily. Classic translation factor GTPase family. EF-G/EF-2 subfamily.

The protein localises to the cytoplasm. Catalyzes the GTP-dependent ribosomal translocation step during translation elongation. During this step, the ribosome changes from the pre-translocational (PRE) to the post-translocational (POST) state as the newly formed A-site-bound peptidyl-tRNA and P-site-bound deacylated tRNA move to the P and E sites, respectively. Catalyzes the coordinated movement of the two tRNA molecules, the mRNA and conformational changes in the ribosome. The chain is Elongation factor G from Prochlorococcus marinus (strain SARG / CCMP1375 / SS120).